Consider the following 529-residue polypeptide: Beta-hexosaminidase subunit alpha (529 aa).

The signal sequence occupies residues 1–22 (MAGSTLRFSLLLAAAFAGRATA). Positions 23–88 (LWPWPQYIQT…RFPHPIEKRH (66 aa)) are excised as a propeptide. A disulfide bridge links C58 with C104. Residues N115, N157, and N295 are each glycosylated (N-linked (GlcNAc...) asparagine). C277 and C328 are joined by a disulfide. E323 serves as the catalytic Proton donor. The tract at residues 423–424 (NH) is critical for hydrolysis GM2 gangliosides. The cysteines at positions 505 and 522 are disulfide-linked.

This sequence belongs to the glycosyl hydrolase 20 family. As to quaternary structure, there are 3 beta-hexosaminidase isozymes: isozyme A (hexosaminidase A) is a heterodimer composed of one subunit alpha and one subunit beta (chain A and B); isozyme B (hexosaminidase B) is a homodimer of two beta subunits (two chains A and B); isozyme S (hexosaminidase S) is a homodimer of two alpha subunits. The composition of the dimer (isozyme A versus isozyme S) has a significant effect on the substrate specificity of the alpha subunit active site.

The protein resides in the lysosome. It carries out the reaction Hydrolysis of terminal non-reducing N-acetyl-D-hexosamine residues in N-acetyl-beta-D-hexosaminides.. The catalysed reaction is N-acetyl-beta-D-galactosaminyl-(1-&gt;4)-beta-D-3-sulfogalactosyl-(1-&gt;4)-beta-D-glucosyl-(1&lt;-&gt;1')-ceramide + H2O = a beta-D-3-sulfogalactosyl-(1-&gt;4)-beta-D-glucosyl-(1&lt;-&gt;1')-ceramide + N-acetyl-beta-D-galactosamine. The enzyme catalyses a ganglioside GM2 (d18:1(4E)) + H2O = a ganglioside GM3 (d18:1(4E)) + N-acetyl-beta-D-galactosamine. It catalyses the reaction a ganglioside GM2 + H2O = a ganglioside GM3 + N-acetyl-beta-D-galactosamine. It carries out the reaction beta-D-GalNAc-(1-&gt;4)-alpha-L-IdoA-(1-&gt;3)-beta-D-GalNAc-4-sulfate-(1-&gt;4)-alpha-L-IdoA-(1-&gt;3)-D-GalNAc-4-sulfate + H2O = alpha-L-IdoA-(1-&gt;3)-beta-D-GalNAc-4-sulfate-(1-&gt;4)-alpha-L-IdoA-(1-&gt;3)-D-GalNAc-4-sulfate + N-acetyl-D-galactosamine. The catalysed reaction is N-acetyl-beta-D-6-sulfogalactosaminyl-(1-&gt;4)-alpha-L-iduronyl-(1-&gt;3)-N-acetyl-D-6-sulfogalactosamine + H2O = alpha-L-iduronyl-(1-&gt;3)-N-acetyl-D-6-sulfogalactosamine + N-acetyl-D-6-sulfogalactosamine. Its activity is regulated as follows. Addition of GM2A stimulates the hydrolysis of sulfated glycosphingolipid SM2 and the ganglioside GM2. Hydrolyzes the non-reducing end N-acetyl-D-hexosamine and/or sulfated N-acetyl-D-hexosamine of glycoconjugates, such as the oligosaccharide moieties from proteins and neutral glycolipids, or from certain mucopolysaccharides. The isozyme S is as active as the isozyme A on the anionic bis-sulfated glycans, the chondroitin-6-sulfate trisaccharide (C6S-3), and the dermatan sulfate pentasaccharide, and the sulfated glycosphingolipid SM2. The isozyme B does not hydrolyze each of these substrates, however hydrolyzes efficiently neutral oligosaccharide. Only the isozyme A is responsible for the degradation of GM2 gangliosides in the presence of GM2A. The protein is Beta-hexosaminidase subunit alpha of Bos taurus (Bovine).